We begin with the raw amino-acid sequence, 396 residues long: Gap junction gamma-1 protein (396 aa).

Residues 1–22 lie on the Cytoplasmic side of the membrane; it reads MSWSFLTRLLEEIHNHSTFVGK. Residues 23–45 traverse the membrane as a helical segment; that stretch reads IWLTVLIVFRIVLTAVGGESIYY. The Extracellular portion of the chain corresponds to 46 to 75; that stretch reads DEQSKFVCNTEQPGCENVCYDAFAPLSHVR. The helical transmembrane segment at 76–95 threads the bilayer; that stretch reads FWVFQIILVATPSVMYLGYA. Over 96-175 the chain is Cytoplasmic; sequence IHKIAKMEHG…RRIREDGLMK (80 aa). A disordered region spans residues 145–165; that stretch reads ELESDKENKEQSQPKPKHDGR. Residues 147-156 show a composition bias toward basic and acidic residues; the sequence is ESDKENKEQS. Residues 176 to 198 form a helical membrane-spanning segment; the sequence is IYVLQLLARTVFEVGFLIGQYFL. At 199 to 228 the chain is on the extracellular side; the sequence is YGFQVHPFYVCSRLPCPHKIDCFISRPTEK. A helical membrane pass occupies residues 229–248; that stretch reads TIFLLIMYGVTGLCLLLNIW. Topologically, residues 249 to 396 are cytoplasmic; the sequence is EMLHLGFGTI…SGDGKTSVWI (148 aa). The interval 353–396 is disordered; it reads VQAYSHQNNPHGPREKKAKVGSKAGSNKSTASSKSGDGKTSVWI. Positions 376-387 are enriched in polar residues; it reads AGSNKSTASSKS.

It belongs to the connexin family. Gamma-type subfamily. As to quaternary structure, a connexon is composed of a hexamer of connexins. Interacts with CNST.

The protein localises to the cell membrane. Its subcellular location is the cell junction. It is found in the gap junction. In terms of biological role, one gap junction consists of a cluster of closely packed pairs of transmembrane channels, the connexons, through which materials of low MW diffuse from one cell to a neighboring cell. The chain is Gap junction gamma-1 protein (GJC1) from Homo sapiens (Human).